The primary structure comprises 497 residues: Malonate-semialdehyde dehydrogenase (497 aa).

NAD(+)-binding residues include Phe148, Lys172, Glu175, Arg176, and Ser225. Cys280 functions as the Nucleophile in the catalytic mechanism. Glu382 contributes to the NAD(+) binding site.

This sequence belongs to the aldehyde dehydrogenase family.

The catalysed reaction is 3-oxopropanoate + NAD(+) + CoA + H2O = hydrogencarbonate + acetyl-CoA + NADH + H(+). Functionally, involved in the degradation of beta-alanine. Likely catalyzes the NAD(+)- and CoA-dependent oxidative decarboxylation of malonate semialdehyde (3-oxopropanoate) to acetyl-CoA. This Pseudomonas aeruginosa (strain ATCC 15692 / DSM 22644 / CIP 104116 / JCM 14847 / LMG 12228 / 1C / PRS 101 / PAO1) protein is Malonate-semialdehyde dehydrogenase.